Reading from the N-terminus, the 358-residue chain is Peptide chain release factor 2 (358 aa).

Residue glutamine 242 is modified to N5-methylglutamine.

Belongs to the prokaryotic/mitochondrial release factor family. Methylated by PrmC. Methylation increases the termination efficiency of RF2.

It localises to the cytoplasm. Its function is as follows. Peptide chain release factor 2 directs the termination of translation in response to the peptide chain termination codons UGA and UAA. This chain is Peptide chain release factor 2 (prfB), found in Borreliella burgdorferi (strain ATCC 35210 / DSM 4680 / CIP 102532 / B31) (Borrelia burgdorferi).